A 325-amino-acid polypeptide reads, in one-letter code: Phospholipid phosphatase-related protein type 1 (325 aa).

An N-linked (GlcNAc...) asparagine glycan is attached at asparagine 5. The next 3 membrane-spanning stretches (helical) occupy residues 13–33 (IIPC…LLAY), 67–87 (FITP…IIFI), and 127–147 (FTGV…AGQV). Asparagine 163 carries an N-linked (GlcNAc...) asparagine glycan. Transmembrane regions (helical) follow at residues 201–218 (AALS…ITST), 230–247 (VLCL…LNRV), and 257–277 (VIAG…CVVH). At serine 307 the chain carries Phosphoserine. A glycan (N-linked (GlcNAc...) asparagine) is linked at asparagine 316.

It belongs to the PA-phosphatase related phosphoesterase family.

It localises to the cell membrane. The protein localises to the cell projection. Its subcellular location is the neuron projection. Its function is as follows. May play a role in neurite outgrowth and neurogenesis. The chain is Phospholipid phosphatase-related protein type 1 from Homo sapiens (Human).